The following is a 144-amino-acid chain: MRLNTLSPAEGAKHNAKRLGRGIGSGLGKTSGRGHKGQKARTGGGVRRGFEGGQMPLYRRLPKFGFTSMKSAVTAEVRLNDLAKVEGNIITLDTLKAANVLTKDIRFAKVILAGEVKTAVTIRGLGVTKGAKVAIEAAGGSIEE.

The segment at 1-53 is disordered; that stretch reads MRLNTLSPAEGAKHNAKRLGRGIGSGLGKTSGRGHKGQKARTGGGVRRGFEGG. A compositionally biased stretch (gly residues) spans 21–31; sequence RGIGSGLGKTS.

This sequence belongs to the universal ribosomal protein uL15 family. Part of the 50S ribosomal subunit.

Functionally, binds to the 23S rRNA. The protein is Large ribosomal subunit protein uL15 of Histophilus somni (strain 129Pt) (Haemophilus somnus).